We begin with the raw amino-acid sequence, 408 residues long: Imidazolonepropionase (408 aa).

H72 and H74 together coordinate Fe(3+). Residues H72 and H74 each contribute to the Zn(2+) site. Residues R81, Y144, and H177 each contribute to the 4-imidazolone-5-propanoate site. Y144 serves as a coordination point for N-formimidoyl-L-glutamate. H242 is a binding site for Fe(3+). H242 provides a ligand contact to Zn(2+). Q245 contributes to the 4-imidazolone-5-propanoate binding site. D317 is a Fe(3+) binding site. D317 lines the Zn(2+) pocket. Positions 319 and 321 each coordinate N-formimidoyl-L-glutamate. Position 322 (T322) interacts with 4-imidazolone-5-propanoate.

This sequence belongs to the metallo-dependent hydrolases superfamily. HutI family. Zn(2+) serves as cofactor. Fe(3+) is required as a cofactor.

The protein resides in the cytoplasm. The enzyme catalyses 4-imidazolone-5-propanoate + H2O = N-formimidoyl-L-glutamate. The protein operates within amino-acid degradation; L-histidine degradation into L-glutamate; N-formimidoyl-L-glutamate from L-histidine: step 3/3. Catalyzes the hydrolytic cleavage of the carbon-nitrogen bond in imidazolone-5-propanoate to yield N-formimidoyl-L-glutamate. It is the third step in the universal histidine degradation pathway. In Aliivibrio fischeri (strain MJ11) (Vibrio fischeri), this protein is Imidazolonepropionase.